We begin with the raw amino-acid sequence, 337 residues long: Pyruvate dehydrogenase E1 component subunit beta (337 aa).

Residue Glu73 coordinates thiamine diphosphate.

As to quaternary structure, heterodimer of an alpha and a beta chain. It depends on thiamine diphosphate as a cofactor.

The catalysed reaction is N(6)-[(R)-lipoyl]-L-lysyl-[protein] + pyruvate + H(+) = N(6)-[(R)-S(8)-acetyldihydrolipoyl]-L-lysyl-[protein] + CO2. Functionally, the pyruvate dehydrogenase complex catalyzes the overall conversion of pyruvate to acetyl-CoA and CO(2). It contains multiple copies of three enzymatic components: pyruvate dehydrogenase (E1), dihydrolipoamide acetyltransferase (E2) and lipoamide dehydrogenase (E3). This chain is Pyruvate dehydrogenase E1 component subunit beta (pdhB), found in Leifsonia xyli subsp. xyli (strain CTCB07).